The sequence spans 946 residues: Bifunctional glutamine synthetase adenylyltransferase/adenylyl-removing enzyme (946 aa).

The tract at residues 1-440 (MKPLSSPLQQ…VFNELIGDDE (440 aa)) is adenylyl removase. The interval 449–946 (SEQWRELWQD…ASWQKWLVEE (498 aa)) is adenylyl transferase.

This sequence belongs to the GlnE family. Requires Mg(2+) as cofactor.

The catalysed reaction is [glutamine synthetase]-O(4)-(5'-adenylyl)-L-tyrosine + phosphate = [glutamine synthetase]-L-tyrosine + ADP. It carries out the reaction [glutamine synthetase]-L-tyrosine + ATP = [glutamine synthetase]-O(4)-(5'-adenylyl)-L-tyrosine + diphosphate. Its function is as follows. Involved in the regulation of glutamine synthetase GlnA, a key enzyme in the process to assimilate ammonia. When cellular nitrogen levels are high, the C-terminal adenylyl transferase (AT) inactivates GlnA by covalent transfer of an adenylyl group from ATP to specific tyrosine residue of GlnA, thus reducing its activity. Conversely, when nitrogen levels are low, the N-terminal adenylyl removase (AR) activates GlnA by removing the adenylyl group by phosphorolysis, increasing its activity. The regulatory region of GlnE binds the signal transduction protein PII (GlnB) which indicates the nitrogen status of the cell. The polypeptide is Bifunctional glutamine synthetase adenylyltransferase/adenylyl-removing enzyme (Shigella boydii serotype 18 (strain CDC 3083-94 / BS512)).